The primary structure comprises 269 residues: RBPJ-interacting and tubulin-associated protein 1 (269 aa).

The Nuclear export signal signature appears at 5-17; it reads VELAVSGIQTLPL. 2 disordered regions span residues 37 to 101 and 141 to 269; these read SLFG…NKYR and FWTP…PPWK. Over residues 62–77 the composition is skewed to polar residues; that stretch reads RTSGVGTGTSRASGAN. A compositionally biased stretch (low complexity) spans 79–93; it reads SCETTSSSGSTPTLT. A Nuclear localization signal motif is present at residues 92–108; the sequence is LTPRKKNKYRLISHTPS. Residues 128-156 form an interaction with RBPJ/RBPSUH region; the sequence is WMAKGDAAKLHSLFWTPPATPRGSHSPRP. The tract at residues 156 to 269 is interaction with tubulin; it reads PRETPLRAIH…ATQKPKPPWK (114 aa).

The protein belongs to the RITA family. Interacts with RBPJ/RBPSUH.

The protein resides in the cytoplasm. It is found in the nucleus. The protein localises to the cytoskeleton. It localises to the microtubule organizing center. Its subcellular location is the centrosome. Its function is as follows. Tubulin-binding protein that acts as a negative regulator of Notch signaling pathway. Shuttles between the cytoplasm and the nucleus and mediates the nuclear export of RBPJ/RBPSUH, thereby preventing the interaction between RBPJ/RBPSUH and NICD product of Notch proteins (Notch intracellular domain), leading to down-regulate Notch-mediated transcription. May play a role in neurogenesis. The polypeptide is RBPJ-interacting and tubulin-associated protein 1 (RITA1) (Ailuropoda melanoleuca (Giant panda)).